We begin with the raw amino-acid sequence, 91 residues long: Small ribosomal subunit protein uS19 (91 aa).

Belongs to the universal ribosomal protein uS19 family.

In terms of biological role, protein S19 forms a complex with S13 that binds strongly to the 16S ribosomal RNA. In Verminephrobacter eiseniae (strain EF01-2), this protein is Small ribosomal subunit protein uS19.